A 127-amino-acid polypeptide reads, in one-letter code: Probable glycine cleavage system H protein (127 aa).

Residues 24-106 (TAEVGITAFA…FGDGWMLTVE (83 aa)) enclose the Lipoyl-binding domain. Lys-65 is modified (N6-lipoyllysine).

It belongs to the GcvH family. The glycine cleavage system is composed of four proteins: P, T, L and H. The cofactor is (R)-lipoate.

Functionally, the glycine cleavage system catalyzes the degradation of glycine. The H protein shuttles the methylamine group of glycine from the P protein to the T protein. The sequence is that of Probable glycine cleavage system H protein from Haloarcula marismortui (strain ATCC 43049 / DSM 3752 / JCM 8966 / VKM B-1809) (Halobacterium marismortui).